Consider the following 311-residue polypeptide: MTEIDFDIAIIGAGPAGMTAAVYASRANLKTVMIERGIPGGQMANTEEVENFPGFEMITGPDLSTKMFEHAKKFGAVYQYGDIKSVEDKGEYKVINFGNKELTAKAVIIATGAEYKKIGVPGEQELGGRGVSYCAVCDGAFFKNKRLFVIGGGDSAVEEGTFLTKFADKVTIVHRRDELRAQRILQDRAFKNDKIDFIWSHTLKSINEKDGKVGSVTLTSTKDGSEETHEADGVFIYIGMKPLTAPFKDLGITNDVGYIVTKDDMTTSVPGIFAAGDVRDKGLRQIVTATGDGSIAAQSAAEYIEHLNDQA.

FAD is bound at residue 35 to 42; that stretch reads ERGIPGGQ. A disulfide bridge links C134 with C137. Residue 277 to 286 coordinates FAD; it reads DVRDKGLRQI.

This sequence belongs to the class-II pyridine nucleotide-disulfide oxidoreductase family. In terms of assembly, homodimer. FAD serves as cofactor.

The protein localises to the cytoplasm. It carries out the reaction [thioredoxin]-dithiol + NADP(+) = [thioredoxin]-disulfide + NADPH + H(+). This chain is Thioredoxin reductase (trxB), found in Staphylococcus aureus (strain COL).